Consider the following 266-residue polypeptide: MLTIFAVSDSIGETAQQVAMAAASQFKDNAEVKRIPYVKSLEDVEDLMKTIEDCEACMIVSTIITVNVREYLTQKCIEKNINIINVLGPIINVASTILNKYPDYNPGAMWNTDETYYKRIEAMEFAMQYDDSKDYRGLKNADVVLVGLSRTSKTPLCMYLANKGIKAINIPLVPEVGVPEELYEIDKKKIFGLTINPLQLIEIRKRRLDKFHRISADIEYASDSRILEEFEFADKILRKIGCRTIDVTQRAIEDTALIIMEKLGVK.

An ADP-binding site is contributed by 147–154; that stretch reads GLSRTSKT.

The protein belongs to the pyruvate, phosphate/water dikinase regulatory protein family. PDRP subfamily.

The enzyme catalyses N(tele)-phospho-L-histidyl/L-threonyl-[pyruvate, phosphate dikinase] + ADP = N(tele)-phospho-L-histidyl/O-phospho-L-threonyl-[pyruvate, phosphate dikinase] + AMP + H(+). It catalyses the reaction N(tele)-phospho-L-histidyl/O-phospho-L-threonyl-[pyruvate, phosphate dikinase] + phosphate + H(+) = N(tele)-phospho-L-histidyl/L-threonyl-[pyruvate, phosphate dikinase] + diphosphate. Bifunctional serine/threonine kinase and phosphorylase involved in the regulation of the pyruvate, phosphate dikinase (PPDK) by catalyzing its phosphorylation/dephosphorylation. The chain is Putative pyruvate, phosphate dikinase regulatory protein from Clostridium perfringens (strain 13 / Type A).